A 238-amino-acid chain; its full sequence is ATP synthase subunit a (238 aa).

A run of 5 helical transmembrane segments spans residues 18–38 (LTLLAVCIVTIAVIFAFVFWA), 76–96 (YSLLLFTIFLFVAVANNLGLF), 114–134 (NLAFDLALSLFITLMVHIEGV), 166–186 (SLAIRLFGNIFAGEVVTGLIV), and 193–213 (VYWWPIAFLVNMAWTAFSVFI).

The protein belongs to the ATPase A chain family. F-type ATPases have 2 components, CF(1) - the catalytic core - and CF(0) - the membrane proton channel. CF(1) has five subunits: alpha(3), beta(3), gamma(1), delta(1), epsilon(1). CF(0) has three main subunits: a(1), b(2) and c(9-12). The alpha and beta chains form an alternating ring which encloses part of the gamma chain. CF(1) is attached to CF(0) by a central stalk formed by the gamma and epsilon chains, while a peripheral stalk is formed by the delta and b chains.

Its subcellular location is the cell membrane. Its function is as follows. Key component of the proton channel; it plays a direct role in the translocation of protons across the membrane. The sequence is that of ATP synthase subunit a from Streptococcus pyogenes serotype M5 (strain Manfredo).